Reading from the N-terminus, the 173-residue chain is Crossover junction endodeoxyribonuclease RuvC (173 aa).

Catalysis depends on residues Asp8, Glu67, and Asp139. Mg(2+)-binding residues include Asp8, Glu67, and Asp139.

It belongs to the RuvC family. As to quaternary structure, homodimer which binds Holliday junction (HJ) DNA. The HJ becomes 2-fold symmetrical on binding to RuvC with unstacked arms; it has a different conformation from HJ DNA in complex with RuvA. In the full resolvosome a probable DNA-RuvA(4)-RuvB(12)-RuvC(2) complex forms which resolves the HJ. Mg(2+) serves as cofactor.

Its subcellular location is the cytoplasm. It catalyses the reaction Endonucleolytic cleavage at a junction such as a reciprocal single-stranded crossover between two homologous DNA duplexes (Holliday junction).. Functionally, the RuvA-RuvB-RuvC complex processes Holliday junction (HJ) DNA during genetic recombination and DNA repair. Endonuclease that resolves HJ intermediates. Cleaves cruciform DNA by making single-stranded nicks across the HJ at symmetrical positions within the homologous arms, yielding a 5'-phosphate and a 3'-hydroxyl group; requires a central core of homology in the junction. The consensus cleavage sequence is 5'-(A/T)TT(C/G)-3'. Cleavage occurs on the 3'-side of the TT dinucleotide at the point of strand exchange. HJ branch migration catalyzed by RuvA-RuvB allows RuvC to scan DNA until it finds its consensus sequence, where it cleaves and resolves the cruciform DNA. This Shewanella putrefaciens (strain CN-32 / ATCC BAA-453) protein is Crossover junction endodeoxyribonuclease RuvC.